The sequence spans 380 residues: Beta sliding clamp (380 aa).

It belongs to the beta sliding clamp family. As to quaternary structure, forms a ring-shaped head-to-tail homodimer around DNA which binds and tethers DNA polymerases and other proteins to the DNA. The DNA replisome complex has a single clamp-loading complex (3 tau and 1 each of delta, delta', psi and chi subunits) which binds 3 Pol III cores (1 core on the leading strand and 2 on the lagging strand) each with a beta sliding clamp dimer. Additional proteins in the replisome are other copies of gamma, psi and chi, Ssb, DNA helicase and RNA primase.

It is found in the cytoplasm. In terms of biological role, confers DNA tethering and processivity to DNA polymerases and other proteins. Acts as a clamp, forming a ring around DNA (a reaction catalyzed by the clamp-loading complex) which diffuses in an ATP-independent manner freely and bidirectionally along dsDNA. Initially characterized for its ability to contact the catalytic subunit of DNA polymerase III (Pol III), a complex, multichain enzyme responsible for most of the replicative synthesis in bacteria; Pol III exhibits 3'-5' exonuclease proofreading activity. The beta chain is required for initiation of replication as well as for processivity of DNA replication. The protein is Beta sliding clamp (dnaN) of Halalkalibacterium halodurans (strain ATCC BAA-125 / DSM 18197 / FERM 7344 / JCM 9153 / C-125) (Bacillus halodurans).